The sequence spans 258 residues: Imidazole glycerol phosphate synthase subunit HisF (258 aa).

Residues Asp-11 and Asp-130 contribute to the active site.

It belongs to the HisA/HisF family. Heterodimer of HisH and HisF.

Its subcellular location is the cytoplasm. The catalysed reaction is 5-[(5-phospho-1-deoxy-D-ribulos-1-ylimino)methylamino]-1-(5-phospho-beta-D-ribosyl)imidazole-4-carboxamide + L-glutamine = D-erythro-1-(imidazol-4-yl)glycerol 3-phosphate + 5-amino-1-(5-phospho-beta-D-ribosyl)imidazole-4-carboxamide + L-glutamate + H(+). Its pathway is amino-acid biosynthesis; L-histidine biosynthesis; L-histidine from 5-phospho-alpha-D-ribose 1-diphosphate: step 5/9. In terms of biological role, IGPS catalyzes the conversion of PRFAR and glutamine to IGP, AICAR and glutamate. The HisF subunit catalyzes the cyclization activity that produces IGP and AICAR from PRFAR using the ammonia provided by the HisH subunit. The sequence is that of Imidazole glycerol phosphate synthase subunit HisF from Escherichia coli O17:K52:H18 (strain UMN026 / ExPEC).